The chain runs to 309 residues: D-alanine--D-alanine ligase (309 aa).

The ATP-grasp domain maps to 105-304; sequence KQIWHSVGLP…FNDLVERILA (200 aa). Residue 135–190 coordinates ATP; the sequence is LQELGGRVIVKPAREGSSIGMSIADNGRSLALALQHAAEFDDDLLVEQWVEGAEYT. The Mg(2+) site is built by Asp258, Glu271, and Asn273.

The protein belongs to the D-alanine--D-alanine ligase family. The cofactor is Mg(2+). Mn(2+) serves as cofactor.

The protein resides in the cytoplasm. It carries out the reaction 2 D-alanine + ATP = D-alanyl-D-alanine + ADP + phosphate + H(+). Its pathway is cell wall biogenesis; peptidoglycan biosynthesis. Cell wall formation. The chain is D-alanine--D-alanine ligase from Idiomarina loihiensis (strain ATCC BAA-735 / DSM 15497 / L2-TR).